The primary structure comprises 684 residues: 77 kDa membrane protein (684 aa).

Residues 1–30 (MKFKSLITTTLALGVLASTGANFNNNEASA) form the signal peptide. MAP repeat units lie at residues 45-154 (GYSK…EDKK), 156-265 (DKAN…ENKA), 266-374 (KRNY…KADR), 375-474 (YVPY…TGTK), 475-584 (AKAD…KKNN), and 586-684 (SNNV…ELKF).

It localises to the cell membrane. Binds various plasma and ECM-proteins. This Staphylococcus aureus (strain COL) protein is 77 kDa membrane protein.